We begin with the raw amino-acid sequence, 193 residues long: dCTP deaminase (193 aa).

DCTP is bound by residues 110-115, aspartate 128, 136-138, tyrosine 171, lysine 178, and glutamine 182; these read RSSLAR and VLE. Glutamate 138 functions as the Proton donor/acceptor in the catalytic mechanism. Residues 169-193 form a disordered region; that stretch reads RPYNRRQDAKYRDQQGAVASRIDKD.

This sequence belongs to the dCTP deaminase family. In terms of assembly, homotrimer.

The enzyme catalyses dCTP + H2O + H(+) = dUTP + NH4(+). The protein operates within pyrimidine metabolism; dUMP biosynthesis; dUMP from dCTP (dUTP route): step 1/2. Catalyzes the deamination of dCTP to dUTP. The protein is dCTP deaminase of Salmonella arizonae (strain ATCC BAA-731 / CDC346-86 / RSK2980).